The primary structure comprises 115 residues: UPF0122 protein NT01CX_2214 (115 aa).

This sequence belongs to the UPF0122 family.

Its function is as follows. Might take part in the signal recognition particle (SRP) pathway. This is inferred from the conservation of its genetic proximity to ftsY/ffh. May be a regulatory protein. This chain is UPF0122 protein NT01CX_2214, found in Clostridium novyi (strain NT).